The chain runs to 110 residues: CHH-like protein (110 aa).

The N-terminal stretch at 1-23 (MHLSSVQFAWAALVALAVSAAGA) is a signal peptide. A propeptide spanning residues 24–35 (LPSSAPHHVERR) is cleaved from the precursor. Intrachain disulfides connect cysteine 42–cysteine 78, cysteine 58–cysteine 74, and cysteine 61–cysteine 87. Position 107 is a valine amide (valine 107).

Belongs to the arthropod CHH/MIH/GIH/VIH hormone family.

Its subcellular location is the secreted. In Bombyx mori (Silk moth), this protein is CHH-like protein (CHHL).